Consider the following 165-residue polypeptide: MSKARNNKKSKLSKAKSNRRLAENRYARHQYEILEDIEAGIELLGTEVKSIRAGNVNLRDGFCLIREGSLLLHNVHISPFNNAGSFFNHEPLRVRKLLAHRKEINKLETQVNRKGLTLVPLNIFLKGSWIKITIGLGKGRKLHDKRENEKRKQSEREVKSALARY.

Residues K141–Y165 form a disordered region. The span at D144–K159 shows a compositional bias: basic and acidic residues.

Belongs to the SmpB family.

The protein resides in the cytoplasm. Its function is as follows. Required for rescue of stalled ribosomes mediated by trans-translation. Binds to transfer-messenger RNA (tmRNA), required for stable association of tmRNA with ribosomes. tmRNA and SmpB together mimic tRNA shape, replacing the anticodon stem-loop with SmpB. tmRNA is encoded by the ssrA gene; the 2 termini fold to resemble tRNA(Ala) and it encodes a 'tag peptide', a short internal open reading frame. During trans-translation Ala-aminoacylated tmRNA acts like a tRNA, entering the A-site of stalled ribosomes, displacing the stalled mRNA. The ribosome then switches to translate the ORF on the tmRNA; the nascent peptide is terminated with the 'tag peptide' encoded by the tmRNA and targeted for degradation. The ribosome is freed to recommence translation, which seems to be the essential function of trans-translation. The protein is SsrA-binding protein of Prochlorococcus marinus (strain SARG / CCMP1375 / SS120).